Consider the following 401-residue polypeptide: Phosphoglycerate kinase (401 aa).

Substrate contacts are provided by residues 24-26 (DFN), arginine 40, 63-66 (HFGR), arginine 122, and arginine 155. ATP contacts are provided by residues lysine 206, glycine 297, glutamate 328, and 357 to 360 (GGDS).

Belongs to the phosphoglycerate kinase family. In terms of assembly, monomer.

The protein localises to the cytoplasm. It carries out the reaction (2R)-3-phosphoglycerate + ATP = (2R)-3-phospho-glyceroyl phosphate + ADP. It functions in the pathway carbohydrate degradation; glycolysis; pyruvate from D-glyceraldehyde 3-phosphate: step 2/5. The sequence is that of Phosphoglycerate kinase from Gloeothece citriformis (strain PCC 7424) (Cyanothece sp. (strain PCC 7424)).